A 440-amino-acid chain; its full sequence is Protein CapE (440 aa).

Helical transmembrane passes span 7–27, 31–51, 60–80, 102–122, 141–161, 179–199, 204–224, 249–269, 324–344, 360–380, 382–402, and 409–429; these read VILI…IGYL, IGFR…VYLL, LVYL…NIFL, FSIA…ISVF, FYYT…FYII, ELPM…FAFS, THIK…LITG, WWMI…IKVF, IFSY…GYGF, YYNG…LLLW, FTNF…SVLI, and FSFV…LLFI.

Its subcellular location is the cell membrane. Its pathway is capsule biogenesis; capsule polysaccharide biosynthesis. Required for the biosynthesis of type 1 capsular polysaccharide. The polypeptide is Protein CapE (capE) (Staphylococcus aureus).